The chain runs to 363 residues: Circumsporozoite protein (363 aa).

The signal sequence occupies residues 1 to 22; the sequence is MKNFILLAVSSILLVDLLPTHF. Over residues 48 to 57 the composition is skewed to polar residues; that stretch reads GAQQVRQSAS. The disordered stretch occupies residues 48–278; sequence GAQQVRQSAS…GQNNQGANAP (231 aa). Over residues 61-96 the composition is skewed to basic and acidic residues; the sequence is GLGEKPKEGADKEKKKEKGKEKEEEPKKPNENKLKQ. The segment at 80-88 is required for the binding to heparan sulfate proteoglycans (HSPGs) on the surface of host hepatocytes; it reads KEKEEEPKK. The segment at 93–97 is region I; contains the proteolytic cleavage site; sequence KLKQP. A 1; approximate repeat occupies 98 to 109; the sequence is NEGQPQAQGDGA. Residues 98–241 form a 12 X 12 AA approximate tandem repeats of N-A-G-Q-P-Q-A-Q-G-D-G-A region; sequence NEGQPQAQGD…GQPQAQGDGA (144 aa). 11 repeat units span residues 110–121, 122–133, 134–145, 146–157, 158–169, 170–181, 182–193, 194–205, 206–217, 218–229, and 230–241. The segment covering 248–259 has biased composition (gly residues); sequence RNGGGAPAGGNE. Residues 260-277 show a composition bias toward low complexity; that stretch reads GNKQAGKGQGQNNQGANA. The TSP type-1 domain occupies 289–341; that stretch reads KIRSSVTTEWTPCSVTCGNGVRIRRKAHAGNKKAEDLTMDDLEVEACVMDKCA. 2 disulfide bridges follow: C301–C335 and C305–C340. An O-linked (Fuc) threonine glycan is attached at T304. C340 carries GPI-anchor amidated cysteine lipidation. Positions 341-363 are cleaved as a propeptide — removed in mature form; that stretch reads AGIFNVVSNSLGLVILLVLALFN.

It belongs to the plasmodium circumsporozoite protein family. During host cell invasion, proteolytically cleaved at the cell membrane in the region I by a papain-like cysteine protease of parasite origin. Cleavage is triggered by the sporozoite contact with highly sulfated heparan sulfate proteoglycans (HSPGs) present on the host hepatocyte cell surface. Cleavage exposes the TSP type-1 (TSR) domain and is required for productive invasion of host hepatocytes but not for adhesion to the host cell membrane. Cleavage is dispensable for sporozoite development in the oocyst, motility and for traversal of host and vector cells. In terms of processing, O-glycosylated; maybe by POFUT2.

It localises to the cell membrane. It is found in the cytoplasm. Functionally, essential sporozoite protein. In the mosquito vector, required for sporozoite development in the oocyst, migration through the vector hemolymph and entry into the vector salivary glands. In the vertebrate host, required for sporozoite migration through the host dermis and infection of host hepatocytes. Binds to highly sulfated heparan sulfate proteoglycans (HSPGs) on the surface of host hepatocytes. Its function is as follows. In the vertebrate host, binds to highly sulfated heparan sulfate proteoglycans (HSPGs) on the surface of host hepatocytes and is required for sporozoite invasion of the host hepatocytes. In Plasmodium knowlesi (strain H), this protein is Circumsporozoite protein.